The sequence spans 23 residues: Major prohead-scaffolding core protein Gp22 (23 aa).

A disordered region spans residues 1–23; that stretch reads KAEEEVEKNKEEAEEKAEKKIAE. The segment covering 7 to 23 has biased composition (basic and acidic residues); it reads EKNKEEAEEKAEKKIAE.

Functionally, gp22 functions in head assembly. In terms of biological role, internal peptide VII: Cleavage product of Gp22 that is incorporated into the mature phage head. The sequence is that of Major prohead-scaffolding core protein Gp22 (22) from Enterobacteria phage T6 (Bacteriophage T6).